Reading from the N-terminus, the 292-residue chain is Protease HtpX homolog (292 aa).

2 consecutive transmembrane segments (helical) span residues 9–29 (TGVL…VLGN) and 31–51 (TGMM…YWYS). Zn(2+) is bound at residue His133. Glu134 is a catalytic residue. His137 is a binding site for Zn(2+). Transmembrane regions (helical) follow at residues 148 to 168 (LAAV…WMLW) and 185 to 205 (LGAI…QMAI). Glu210 is a binding site for Zn(2+).

It belongs to the peptidase M48B family. Zn(2+) serves as cofactor.

Its subcellular location is the cell membrane. This is Protease HtpX homolog from Thermococcus sibiricus (strain DSM 12597 / MM 739).